Reading from the N-terminus, the 251-residue chain is 3-deoxy-manno-octulosonate cytidylyltransferase (251 aa).

This sequence belongs to the KdsB family.

The protein resides in the cytoplasm. It carries out the reaction 3-deoxy-alpha-D-manno-oct-2-ulosonate + CTP = CMP-3-deoxy-beta-D-manno-octulosonate + diphosphate. It functions in the pathway nucleotide-sugar biosynthesis; CMP-3-deoxy-D-manno-octulosonate biosynthesis; CMP-3-deoxy-D-manno-octulosonate from 3-deoxy-D-manno-octulosonate and CTP: step 1/1. The protein operates within bacterial outer membrane biogenesis; lipopolysaccharide biosynthesis. Activates KDO (a required 8-carbon sugar) for incorporation into bacterial lipopolysaccharide in Gram-negative bacteria. The protein is 3-deoxy-manno-octulosonate cytidylyltransferase of Chelativorans sp. (strain BNC1).